The chain runs to 300 residues: MKIAILSRDGTLYSCKRLREAAMRRGHLVEILDPLSCYMNINPAASSIHYKGRRLPHFDAVIPRIGSAITFYGTAALRQFELLGSYPLNESVAITRARDKLRSLQLLARQGIDLPITGIAHSPDDTSDLIKMVGGAPLVVKLVEGTQGIGVVLAETRQAAESVIDAFRGLNAHILVQEYIAEAKGCDIRCLVVGNEVVAAIERCAKAGDFRSNLHRGGVASIATITPRERDIAIKAAQTLGLDVAGVDILRAARGPLVMEVNASPGLEGIEKTTGVDIAGRMIQWIERHATPEFCLKIGG.

Residues 104–287 enclose the ATP-grasp domain; sequence LQLLARQGID…IAGRMIQWIE (184 aa). ATP-binding positions include K141, 178 to 179, D187, and 211 to 213; these read EY and RSN. Residues D248, E260, and N262 each contribute to the Mg(2+) site. Mn(2+) is bound by residues D248, E260, and N262.

The protein belongs to the RimK family. It depends on Mg(2+) as a cofactor. Requires Mn(2+) as cofactor.

An L-glutamate ligase that catalyzes the ATP-dependent post-translational addition of glutamate residues to the C-terminus of ribosomal protein bS6 (RpsF). Is also able to catalyze the synthesis of poly-alpha-glutamate in vitro, via ATP hydrolysis from unprotected glutamate as substrate. The number of glutamate residues added to either RpsF or to poly-alpha-glutamate changes with pH. The sequence is that of Ribosomal protein bS6--L-glutamate ligase from Salmonella agona (strain SL483).